Reading from the N-terminus, the 337-residue chain is Putative 2-aminoethylphosphonate-binding periplasmic protein (337 aa).

Residues 1–21 (MKLSRLALLSVFALASAPSWA) form the signal peptide.

Belongs to the bacterial solute-binding protein 1 family.

The protein localises to the periplasm. Its function is as follows. Probably part of the PhnSTUV complex (TC 3.A.1.11.5) involved in 2-aminoethylphosphonate import. This chain is Putative 2-aminoethylphosphonate-binding periplasmic protein (phnS), found in Salmonella paratyphi A (strain ATCC 9150 / SARB42).